The sequence spans 304 residues: MAHYHNDYQKNDEVEFVRTGYGKDMVKVLHIQRDGKYHSIKEVATSVQLTLNSRREYLHGDNSDIIPTDTIKNTVQVLAKFKGIKSIETFAMNICEHFLSSFNHVIRVQVYVEEVPWKRFEKNGVKHVHAFIHTPTGTHFCEVEQLRSGPPVIHSGIKDLKVLKTTQSGFEGFLKDQFTTLPEVKDRCFATQVYCKWRYHQGRDVDFEATWEAVRGIVLKKFAGPYDKGEYSPSVQKTLYDIQVLSLSQLPEIEDMEISLPNIHYFNIDMSKMGLINKEEVLLPLDNPYGRITGTVKRKLTSRL.

N-acetylalanine is present on Ala2. Residues Lys10 and Lys23 each carry the N6-acetyllysine; alternate modification. 2 positions are modified to N6-succinyllysine; alternate: Lys10 and Lys23. Lys23 functions as the Charge relay system in the catalytic mechanism. An N6-acetyllysine mark is found at Lys27 and Lys36. Residues Ser39 and Ser63 each carry the phosphoserine modification. The Charge relay system role is filled by Thr68. Positions 68 and 69 each coordinate urate. Lys118, Lys122, and Lys164 each carry N6-acetyllysine. Position 170 (Phe170) interacts with urate. N6-acetyllysine is present on residues Lys175 and Lys185. Urate is bound at residue Arg187. Residues Lys221 and Lys228 each carry the N6-acetyllysine; alternate modification. Lys221 and Lys228 each carry N6-succinyllysine; alternate. Ser232 bears the Phosphoserine mark. Positions 235, 236, and 262 each coordinate urate. His264 functions as the Charge relay system in the catalytic mechanism. Position 278 is an N6-acetyllysine (Lys278). A Phosphotyrosine modification is found at Tyr289. Positions 302-304 (SRL) match the Microbody targeting signal motif.

This sequence belongs to the uricase family. Homotetramer.

It is found in the peroxisome. It catalyses the reaction urate + O2 + H2O = 5-hydroxyisourate + H2O2. It functions in the pathway purine metabolism; urate degradation; (S)-allantoin from urate: step 1/3. In terms of biological role, catalyzes the oxidation of uric acid to 5-hydroxyisourate, which is further processed to form (S)-allantoin. The chain is Uricase (UOX) from Bos taurus (Bovine).